A 404-amino-acid chain; its full sequence is Coenzyme F420H(2) oxidase (404 aa).

7 residues coordinate Fe cation: histidine 83, glutamate 85, aspartate 87, histidine 88, histidine 151, aspartate 170, and histidine 233. One can recognise a Flavodoxin-like domain in the interval valine 259–alanine 399. FMN is bound by residues threonine 265–threonine 270, threonine 317–aspartate 320, and serine 351–glycine 356.

In the N-terminal section; belongs to the zinc metallo-hydrolase group 3 family. Homodimer. Homotetramer. The tetramer is composed of two functional dimers. FMN is required as a cofactor. Requires Fe cation as cofactor.

It carries out the reaction 2 reduced coenzyme F420-(gamma-L-Glu)(n) + O2 = 2 oxidized coenzyme F420-(gamma-L-Glu)(n) + 2 H2O + 2 H(+). Its function is as follows. Catalyzes the oxidation of F420H(2) with O(2). May be involved in O(2) detoxification, reducing the intracellular O(2) concentration to a level allowing growth at the expense of methane formation. In Methanothermobacter marburgensis (strain ATCC BAA-927 / DSM 2133 / JCM 14651 / NBRC 100331 / OCM 82 / Marburg) (Methanobacterium thermoautotrophicum), this protein is Coenzyme F420H(2) oxidase.